The primary structure comprises 96 residues: Probable quinol oxidase subunit 4 (96 aa).

3 helical membrane passes run 8–28 (TVGFIASIVLTLLAVYVTLYT), 36–56 (LTIIFGFAFVQAGLQLLMFMH), and 68–88 (FKVIFALVITLCFVVGTYWVM).

Belongs to the cytochrome c oxidase bacterial subunit 4 family.

The protein resides in the cell membrane. It carries out the reaction 2 a quinol + O2 = 2 a quinone + 2 H2O. In terms of biological role, catalyzes quinol oxidation with the concomitant reduction of oxygen to water. The chain is Probable quinol oxidase subunit 4 (qoxD) from Staphylococcus aureus (strain USA300).